The sequence spans 739 residues: Nuclear pore complex protein NUP62 (739 aa).

19 tandem repeats follow at residues 6-7 (FG), 17-18 (FG), 50-51 (FG), 52-53 (FG), 68-69 (FG), 70-71 (FG), 78-79 (FG), 80-81 (FG), 91-92 (FG), 93-94 (FG), 108-109 (FG), 110-111 (FG), 124-125 (FG), 141-142 (FG), 159-160 (FG), 174-175 (FG), 186-187 (FG), 207-208 (FG), and 221-222 (FG). The 26 X 2 AA repeats of F-G stretch occupies residues 6–450 (FGQSNSVGGF…AATFSTTGFG (445 aa)). The tract at residues 18–67 (GSSSATNSSSASSTTSPLSFSFNQSSNPSSTGFGFGSSVSSTPASSTTPS) is disordered. Low complexity predominate over residues 79–218 (GFGSSASSST…ASSSAATSTS (140 aa)). The tract at residues 79–245 (GFGSSASSST…VASSAPGSSS (167 aa)) is disordered. Over residues 232–245 (PSFSVASSAPGSSS) the composition is skewed to low complexity. A run of 5 repeats spans residues 248 to 249 (FG), 271 to 272 (FG), 280 to 281 (FG), 308 to 309 (FG), and 366 to 367 (FG). Disordered regions lie at residues 281–329 (GSSS…ASPF), 341–366 (TASSTTSSTTPSAPPQTASSSSSFSF), and 399–418 (TTTSSSTPAATSAPASSAPA). 2 consecutive repeat copies span residues 426 to 427 (FG) and 449 to 450 (FG). The disordered stretch occupies residues 471–533 (KTSTPASSSQ…AVAPVAGSPK (63 aa)). A compositionally biased stretch (low complexity) spans 472–519 (TSTPASSSQPQTTSPAFSFSLPSSTSTTAPATSSATTTQTTLVVPSSS). Residues 584 to 674 (RLEIEVAKVV…IRSIIQSVNA (91 aa)) are a coiled coil.

The protein belongs to the nucleoporin NSP1/NUP62 family. In terms of assembly, part of the nuclear pore complex (NPC). The NPC has an eight-fold symmetrical structure comprising a central transport channel and two rings, the cytoplasmic and nuclear rings, to which eight filaments are attached. The cytoplasmic filaments have loose ends, while the nuclear filaments are joined in a distal ring, forming a nuclear basket. NPCs are highly dynamic in configuration and composition, and can be devided in 3 subcomplexes, the NUP62 subcomplex, the NUP107-160 subcomplex and the NUP93 subcomplex, containing approximately 30 different nucleoporin proteins. Interacts with NUP58 and the importin KPNB1.

It is found in the nucleus envelope. The protein resides in the nucleus. It localises to the nuclear pore complex. The sequence is that of Nuclear pore complex protein NUP62 from Arabidopsis thaliana (Mouse-ear cress).